Here is a 346-residue protein sequence, read N- to C-terminus: Sulfate/thiosulfate import ATP-binding protein CysA (346 aa).

The 235-residue stretch at valine 3–isoleucine 237 folds into the ABC transporter domain. Glycine 35–threonine 42 is an ATP binding site.

Belongs to the ABC transporter superfamily. Sulfate/tungstate importer (TC 3.A.1.6) family. As to quaternary structure, the complex is composed of two ATP-binding proteins (CysA), two transmembrane proteins (CysT and CysW) and a solute-binding protein (CysP).

The protein localises to the cell inner membrane. The catalysed reaction is sulfate(out) + ATP + H2O = sulfate(in) + ADP + phosphate + H(+). It carries out the reaction thiosulfate(out) + ATP + H2O = thiosulfate(in) + ADP + phosphate + H(+). Part of the ABC transporter complex CysAWTP involved in sulfate/thiosulfate import. Responsible for energy coupling to the transport system. The sequence is that of Sulfate/thiosulfate import ATP-binding protein CysA from Mesorhizobium japonicum (strain LMG 29417 / CECT 9101 / MAFF 303099) (Mesorhizobium loti (strain MAFF 303099)).